Consider the following 65-residue polypeptide: Myotoxin-1 (65 aa).

Positions 1–22 are cleaved as a signal peptide; sequence MKILYLLFAFLFLAFLSEPGNA. 3 disulfides stabilise this stretch: Cys-26/Cys-58, Cys-33/Cys-52, and Cys-40/Cys-59.

Belongs to the crotamine-myotoxin family. Monomer. As to expression, expressed by the venom gland.

Its subcellular location is the secreted. Its function is as follows. Cationic peptide that possesses multiple functions. It acts as a cell-penetrating peptide (CPP), and as a potent voltage-gated potassium channel (Kv) inhibitor. It exhibits antimicrobial activities, hind limb paralysis, and severe muscle necrosis by a non-enzymatic mechanism. This Crotalus durissus terrificus (South American rattlesnake) protein is Myotoxin-1.